The chain runs to 157 residues: Endoribonuclease YbeY (157 aa).

Zn(2+) contacts are provided by His114, His118, and His124.

The protein belongs to the endoribonuclease YbeY family. Zn(2+) serves as cofactor.

The protein resides in the cytoplasm. Single strand-specific metallo-endoribonuclease involved in late-stage 70S ribosome quality control and in maturation of the 3' terminus of the 16S rRNA. This is Endoribonuclease YbeY from Yersinia enterocolitica serotype O:8 / biotype 1B (strain NCTC 13174 / 8081).